The chain runs to 249 residues: Domoic acid biosynthesis cluster protein B (249 aa).

In terms of biological role, unknown function: part of the gene cluster that mediates the biosynthesis of domoic acid (DA) and derivatives, natural products with neurochemical activity acting as ionotropic glutamate receptor (iGluR) agonists, thus being neurotoxins causing amnesic shellfish poisoning (ASP). The polypeptide is Domoic acid biosynthesis cluster protein B (Pseudo-nitzschia multiseries (Marine planktonic diatom)).